A 172-amino-acid chain; its full sequence is Small ribosomal subunit protein uS13 (172 aa).

Residues 131–172 are disordered; the sequence is GQRTRTTGRTGVTVGVRRSKAAQAAQQQQKAQASSGGEKKQG. Over residues 134-163 the composition is skewed to low complexity; that stretch reads TRTTGRTGVTVGVRRSKAAQAAQQQQKAQA.

The protein belongs to the universal ribosomal protein uS13 family. Part of the 30S ribosomal subunit. Forms a loose heterodimer with protein S19. Forms two bridges to the 50S subunit in the 70S ribosome.

Its function is as follows. Located at the top of the head of the 30S subunit, it contacts several helices of the 16S rRNA. In the 70S ribosome it contacts the 23S rRNA (bridge B1a) and protein L5 of the 50S subunit (bridge B1b), connecting the 2 subunits; these bridges are implicated in subunit movement. The polypeptide is Small ribosomal subunit protein uS13 (Sulfurisphaera tokodaii (strain DSM 16993 / JCM 10545 / NBRC 100140 / 7) (Sulfolobus tokodaii)).